We begin with the raw amino-acid sequence, 181 residues long: CDP-diacylglycerol--glycerol-3-phosphate 3-phosphatidyltransferase (181 aa).

4 consecutive transmembrane segments (helical) span residues 8 to 28, 35 to 55, 64 to 84, and 148 to 168; these read PNYL…TFYI, MLGA…GYIA, FGKM…IIML, and IIYL…LTII.

Belongs to the CDP-alcohol phosphatidyltransferase class-I family.

It localises to the cell membrane. The catalysed reaction is a CDP-1,2-diacyl-sn-glycerol + sn-glycerol 3-phosphate = a 1,2-diacyl-sn-glycero-3-phospho-(1'-sn-glycero-3'-phosphate) + CMP + H(+). The protein operates within phospholipid metabolism; phosphatidylglycerol biosynthesis; phosphatidylglycerol from CDP-diacylglycerol: step 1/2. In terms of biological role, this protein catalyzes the committed step to the synthesis of the acidic phospholipids. The sequence is that of CDP-diacylglycerol--glycerol-3-phosphate 3-phosphatidyltransferase (pgsA) from Rickettsia bellii (strain RML369-C).